We begin with the raw amino-acid sequence, 342 residues long: N-acetyl-gamma-glutamyl-phosphate reductase (342 aa).

Cys149 is an active-site residue.

This sequence belongs to the NAGSA dehydrogenase family. Type 1 subfamily.

It is found in the cytoplasm. The catalysed reaction is N-acetyl-L-glutamate 5-semialdehyde + phosphate + NADP(+) = N-acetyl-L-glutamyl 5-phosphate + NADPH + H(+). It participates in amino-acid biosynthesis; L-arginine biosynthesis; N(2)-acetyl-L-ornithine from L-glutamate: step 3/4. In terms of biological role, catalyzes the NADPH-dependent reduction of N-acetyl-5-glutamyl phosphate to yield N-acetyl-L-glutamate 5-semialdehyde. The polypeptide is N-acetyl-gamma-glutamyl-phosphate reductase (Rhodobacter capsulatus (strain ATCC BAA-309 / NBRC 16581 / SB1003)).